Reading from the N-terminus, the 470-residue chain is uncharacterized protein (470 aa).

The 337-residue stretch at Met-1–Gln-337 folds into the SPX domain. The disordered stretch occupies residues Ala-118–Gln-145. Low complexity predominate over residues Pro-122–Thr-136. The RING-type zinc-finger motif lies at Cys-374–Arg-413.

The protein localises to the cytoplasm. This is an uncharacterized protein from Schizosaccharomyces pombe (strain 972 / ATCC 24843) (Fission yeast).